The sequence spans 103 residues: High-potential iron-sulfur protein (103 aa).

The first 28 residues, 1-28 (MSNRRLFLKSIPIMAAAGAVGMAGLARA), serve as a signal peptide directing secretion. Residues cysteine 66, cysteine 69, cysteine 82, and cysteine 96 each contribute to the [4Fe-4S] cluster site.

It belongs to the high-potential iron-sulfur protein (HiPIP) family. In terms of assembly, homodimer.

It is found in the periplasm. In terms of biological role, specific class of high-redox-potential 4Fe-4S ferredoxins. Functions in anaerobic electron transport in most purple and in some other photosynthetic bacteria and in at least one genus (Paracoccus) of halophilic, denitrifying bacteria. This Ralstonia nicotianae (strain ATCC BAA-1114 / GMI1000) (Ralstonia solanacearum) protein is High-potential iron-sulfur protein (hip).